A 510-amino-acid polypeptide reads, in one-letter code: Mitogen-activated protein kinase 9 (510 aa).

In terms of domain architecture, Protein kinase spans 23–314 (YQIQEVIGKG…AEEALADPYF (292 aa)). ATP-binding positions include 29 to 37 (IGKGSYGVV) and lysine 52. The active-site Proton acceptor is aspartate 149. The residue at position 185 (threonine 185) is a Phosphothreonine. The short motif at 185-187 (TDY) is the TXY element. A Phosphotyrosine modification is found at tyrosine 187. At threonine 190 the chain carries Phosphothreonine. The segment at 393-461 (NYGKGEKGSP…SDYRNGTSQT (69 aa)) is disordered. Basic and acidic residues predominate over residues 410 to 431 (LPRERVPAPKKENGSHNHDIEN). The span at 433-461 (SIASLVTTLESPPTSQHEGSDYRNGTSQT) shows a compositional bias: polar residues.

It belongs to the protein kinase superfamily. CMGC Ser/Thr protein kinase family. MAP kinase subfamily. In terms of processing, dually phosphorylated on Thr-185 and Tyr-187, which activates the enzyme.

It carries out the reaction L-seryl-[protein] + ATP = O-phospho-L-seryl-[protein] + ADP + H(+). The enzyme catalyses L-threonyl-[protein] + ATP = O-phospho-L-threonyl-[protein] + ADP + H(+). Activated by threonine and tyrosine phosphorylation. In Arabidopsis thaliana (Mouse-ear cress), this protein is Mitogen-activated protein kinase 9 (MPK9).